The following is a 141-amino-acid chain: Putative 8-oxo-dGTP diphosphatase 2 (141 aa).

Residues leucine 2 to asparagine 131 form the Nudix hydrolase domain. Mg(2+)-binding residues include glycine 37, glutamate 52, glutamate 55, and glutamate 56. The Nudix box motif lies at glycine 37–glycine 58.

This sequence belongs to the Nudix hydrolase family. It depends on Mg(2+) as a cofactor. Mn(2+) serves as cofactor.

It catalyses the reaction 8-oxo-dGTP + H2O = 8-oxo-dGMP + diphosphate + H(+). May be involved in the GO system responsible for removing an oxidatively damaged form of guanine (7,8-dihydro-8-oxoguanine, 8-oxo-dGTP) from DNA and the nucleotide pool. 8-oxo-dGTP is inserted opposite dA and dC residues of template DNA with almost equal efficiency thus leading to A.T to G.C transversions. MutT specifically degrades 8-oxo-dGTP to the monophosphate. The polypeptide is Putative 8-oxo-dGTP diphosphatase 2 (mutT2) (Mycobacterium tuberculosis (strain CDC 1551 / Oshkosh)).